The following is a 244-amino-acid chain: Venom nerve growth factor 1 (244 aa).

Residues 1-18 form the signal peptide; sequence MSMLCYTLIIAFLIGIWA. Positions 19–125 are excised as a propeptide; sequence APKSEDNVPL…TLNRNIRAKR (107 aa). Basic and acidic residues predominate over residues 47-66; it reads GLKTSRNTDQRHPAPKKAED. Residues 47-67 are disordered; it reads GLKTSRNTDQRHPAPKKAEDQ. Intrachain disulfides connect cysteine 139–cysteine 205, cysteine 181–cysteine 233, and cysteine 193–cysteine 235.

It belongs to the NGF-beta family. Homodimer; non-covalently linked. In terms of tissue distribution, expressed by the venom gland.

It is found in the secreted. In terms of biological role, nerve growth factor is important for the development and maintenance of the sympathetic and sensory nervous systems. It stimulates division and differentiation of sympathetic and embryonic sensory neurons as well as basal forebrain cholinergic neurons in the brain. Its relevance in the snake venom is not clear. However, it has been shown to inhibit metalloproteinase-dependent proteolysis of platelet glycoprotein Ib alpha, suggesting a metalloproteinase inhibition to prevent metalloprotease autodigestion and/or protection against prey proteases. Binds a lipid between the two protein chains in the homodimer. The lipid-bound form promotes histamine relase from mouse mast cells, contrary to the lipid-free form. This is Venom nerve growth factor 1 from Notechis scutatus scutatus (Mainland tiger snake).